Consider the following 431-residue polypeptide: Arginine biosynthesis bifunctional protein ArgJ, mitochondrial (431 aa).

6 residues coordinate substrate: Thr174, Lys200, Thr211, Glu297, Asn426, and Thr431. Thr211 acts as the Nucleophile in catalysis.

This sequence belongs to the ArgJ family. In terms of assembly, heterodimer of an alpha and a beta chain. In terms of processing, the alpha and beta chains are autoproteolytically processed from a single precursor protein within the mitochondrion.

It is found in the mitochondrion matrix. The catalysed reaction is N(2)-acetyl-L-ornithine + L-glutamate = N-acetyl-L-glutamate + L-ornithine. The enzyme catalyses L-glutamate + acetyl-CoA = N-acetyl-L-glutamate + CoA + H(+). It functions in the pathway amino-acid biosynthesis; L-arginine biosynthesis; L-ornithine and N-acetyl-L-glutamate from L-glutamate and N(2)-acetyl-L-ornithine (cyclic): step 1/1. Its pathway is amino-acid biosynthesis; L-arginine biosynthesis; N(2)-acetyl-L-ornithine from L-glutamate: step 1/4. Catalyzes two activities which are involved in the cyclic version of arginine biosynthesis: the synthesis of acetylglutamate from glutamate and acetyl-CoA, and of ornithine by transacetylation between acetylornithine and glutamate. This chain is Arginine biosynthesis bifunctional protein ArgJ, mitochondrial, found in Yarrowia lipolytica (strain CLIB 122 / E 150) (Yeast).